A 162-amino-acid chain; its full sequence is Regulator of sigma D (162 aa).

Belongs to the Rsd/AlgQ family. Interacts with RpoD.

The protein resides in the cytoplasm. Its function is as follows. Binds RpoD and negatively regulates RpoD-mediated transcription activation by preventing the interaction between the primary sigma factor RpoD with the catalytic core of the RNA polymerase and with promoter DNA. May be involved in replacement of the RNA polymerase sigma subunit from RpoD to RpoS during the transition from exponential growth to the stationary phase. This is Regulator of sigma D from Salmonella paratyphi A (strain ATCC 9150 / SARB42).